The primary structure comprises 381 residues: uncharacterized protein (381 aa).

Disordered stretches follow at residues 1-20 (MPYY…FDPT) and 36-381 (IPPS…EDDE). The span at 9–18 (NDVDDFDEFD) shows a compositional bias: acidic residues. Basic and acidic residues-rich tracts occupy residues 166–175 (TEVEYGRRPE) and 186–237 (SESE…EGYR). Phosphoserine is present on residues serine 339, serine 346, and serine 357. The segment covering 364–374 (KKHRHKHHHQK) has biased composition (basic residues).

This is an uncharacterized protein from Arabidopsis thaliana (Mouse-ear cress).